A 296-amino-acid chain; its full sequence is Phosphatidylglycerol--prolipoprotein diacylglyceryl transferase (296 aa).

The next 3 membrane-spanning stretches (helical) occupy residues 17-37 (LAVR…IVVG), 59-79 (MMFY…VLFY), and 97-117 (GGMS…LFAW). R142 is a binding site for a 1,2-diacyl-sn-glycero-3-phospho-(1'-sn-glycerol). 2 consecutive transmembrane segments (helical) span residues 230 to 250 (MGAV…TVEF) and 257 to 277 (FLGL…PMIL).

This sequence belongs to the Lgt family.

Its subcellular location is the cell inner membrane. The catalysed reaction is L-cysteinyl-[prolipoprotein] + a 1,2-diacyl-sn-glycero-3-phospho-(1'-sn-glycerol) = an S-1,2-diacyl-sn-glyceryl-L-cysteinyl-[prolipoprotein] + sn-glycerol 1-phosphate + H(+). It participates in protein modification; lipoprotein biosynthesis (diacylglyceryl transfer). Functionally, catalyzes the transfer of the diacylglyceryl group from phosphatidylglycerol to the sulfhydryl group of the N-terminal cysteine of a prolipoprotein, the first step in the formation of mature lipoproteins. The protein is Phosphatidylglycerol--prolipoprotein diacylglyceryl transferase of Burkholderia lata (strain ATCC 17760 / DSM 23089 / LMG 22485 / NCIMB 9086 / R18194 / 383).